The sequence spans 90 residues: Small ribosomal subunit protein bS16 (90 aa).

This sequence belongs to the bacterial ribosomal protein bS16 family.

The sequence is that of Small ribosomal subunit protein bS16 from Bacillus cytotoxicus (strain DSM 22905 / CIP 110041 / 391-98 / NVH 391-98).